We begin with the raw amino-acid sequence, 770 residues long: Probable copper-exporting P-type ATPase V (770 aa).

One can recognise an HMA domain in the interval 1–66 (MRVCVTGFNV…AITKAQHVPA (66 aa)). Residues 103-130 (DKPLKASRCGGRPRGPVRGSASWPGEQN) are disordered. Over residues 110–121 (RCGGRPRGPVRG) the composition is skewed to low complexity. 6 helical membrane passes run 141–161 (VWLALPLGLLALGSSMFFGAY), 164–184 (AGWLAFAATLPVQFVAGWPIL), 193–213 (ALTSNMDTLIALGTLTAFVYS), 217–237 (LFAGGPLFFDTSALIIAFVVL), 377–397 (AVFVPAVIGVAVATFAGWTLI), and 402–422 (VAGMTAAVAVLIIACPCALGL). Asp460 functions as the 4-aspartylphosphate intermediate in the catalytic mechanism. 2 residues coordinate Mg(2+): Asp660 and Asp664. 2 helical membrane passes run 718–737 (LGWAFGYNTAAIPLAALGAL) and 741–760 (VAGAAMGFSSVSVVTNSLRL).

This sequence belongs to the cation transport ATPase (P-type) (TC 3.A.3) family. Type IB subfamily.

The protein localises to the cell membrane. It carries out the reaction Cu(+)(in) + ATP + H2O = Cu(+)(out) + ADP + phosphate + H(+). Its function is as follows. Necessary for copper homeostasis and likely functions as a copper exporter. Also required for full virulence. This Mycobacterium tuberculosis (strain CDC 1551 / Oshkosh) protein is Probable copper-exporting P-type ATPase V (ctpV).